A 682-amino-acid polypeptide reads, in one-letter code: Two-component system protein A (682 aa).

The disordered stretch occupies residues 11–41 (SLDDNDNGQQHQDEVQAKHQDQGHTCPSRPS). Residues 21 to 32 (HQDEVQAKHQDQ) are compositionally biased toward basic and acidic residues. 2 consecutive PAS domains span residues 45–105 (LSRI…PILY) and 166–239 (MNET…LREG). The PAC domain maps to 241–292 (IEDEGWRYRRDGSRFWANVLITPIYQFGQHVGFVKVTRDLTERKEAEACMIA). The Histidine kinase domain maps to 307-530 (NISHEIRTPM…VFWFTAKMGG (224 aa)). Residue His310 is modified to Phosphohistidine; by autocatalysis. Residues 563–680 (HVLLVEDNIV…QLLRVLWKWF (118 aa)) form the Response regulatory domain. Position 615 is a 4-aspartylphosphate (Asp615).

In terms of processing, activation probably requires a transfer of a phosphate group between a His in the histidine kinase domain and an Asp of the response regulatory domain.

It is found in the cytoplasm. It carries out the reaction ATP + protein L-histidine = ADP + protein N-phospho-L-histidine.. May be part of a two-component regulatory system required for formation of conidia on certain growth media. The chain is Two-component system protein A from Emericella nidulans (strain FGSC A4 / ATCC 38163 / CBS 112.46 / NRRL 194 / M139) (Aspergillus nidulans).